The primary structure comprises 166 residues: Large ribosomal subunit protein uL10 (166 aa).

The protein belongs to the universal ribosomal protein uL10 family. Part of the ribosomal stalk of the 50S ribosomal subunit. The N-terminus interacts with L11 and the large rRNA to form the base of the stalk. The C-terminus forms an elongated spine to which L12 dimers bind in a sequential fashion forming a multimeric L10(L12)X complex.

Functionally, forms part of the ribosomal stalk, playing a central role in the interaction of the ribosome with GTP-bound translation factors. In Listeria innocua serovar 6a (strain ATCC BAA-680 / CLIP 11262), this protein is Large ribosomal subunit protein uL10.